Consider the following 628-residue polypeptide: Glutamyl-tRNA(Gln) amidotransferase subunit E (628 aa).

The protein belongs to the GatB/GatE family. GatE subfamily. In terms of assembly, heterodimer of GatD and GatE.

It catalyses the reaction L-glutamyl-tRNA(Gln) + L-glutamine + ATP + H2O = L-glutaminyl-tRNA(Gln) + L-glutamate + ADP + phosphate + H(+). Allows the formation of correctly charged Gln-tRNA(Gln) through the transamidation of misacylated Glu-tRNA(Gln) in organisms which lack glutaminyl-tRNA synthetase. The reaction takes place in the presence of glutamine and ATP through an activated gamma-phospho-Glu-tRNA(Gln). The GatDE system is specific for glutamate and does not act on aspartate. The polypeptide is Glutamyl-tRNA(Gln) amidotransferase subunit E (Sulfurisphaera tokodaii (strain DSM 16993 / JCM 10545 / NBRC 100140 / 7) (Sulfolobus tokodaii)).